We begin with the raw amino-acid sequence, 323 residues long: tRNA dimethylallyltransferase (323 aa).

Position 12-19 (12-19 (GPTAAGKT)) interacts with ATP. 14–19 (TAAGKT) is a binding site for substrate. Interaction with substrate tRNA stretches follow at residues 37–40 (DSAL) and 161–165 (QRLMR).

This sequence belongs to the IPP transferase family. In terms of assembly, monomer. It depends on Mg(2+) as a cofactor.

The enzyme catalyses adenosine(37) in tRNA + dimethylallyl diphosphate = N(6)-dimethylallyladenosine(37) in tRNA + diphosphate. In terms of biological role, catalyzes the transfer of a dimethylallyl group onto the adenine at position 37 in tRNAs that read codons beginning with uridine, leading to the formation of N6-(dimethylallyl)adenosine (i(6)A). This chain is tRNA dimethylallyltransferase, found in Pseudomonas aeruginosa (strain UCBPP-PA14).